The sequence spans 833 residues: Protein PAT1 homolog 1 (833 aa).

Disordered stretches follow at residues 279 to 313 (DMRE…MHGM), 398 to 427 (NIRQ…SGMP), and 492 to 549 (EEAT…DKKL). Low complexity predominate over residues 303-313 (PSLSPGGMHGM). Polar residues predominate over residues 398-408 (NIRQNGPQFSH).

This sequence belongs to the PAT1 family.

It is found in the cytoplasm. Its subcellular location is the P-body. Its function is as follows. RNA-binding protein involved in deadenylation-dependent decapping of mRNAs, leading to the degradation of mRNAs. Acts as a scaffold protein that connects deadenylation and decapping machinery. Required for the recruitment of P-body components such as cgh-1 in somatic blastomeres. May play a role in recruiting the decapping enzyme dcap-1 to cytoplasmic puncta in the cell body of the posterior touch receptor neuron, PLM. This chain is Protein PAT1 homolog 1, found in Caenorhabditis elegans.